The primary structure comprises 522 residues: Peptide chain release factor 3 (522 aa).

The 268-residue stretch at A10 to S277 folds into the tr-type G domain. GTP is bound by residues S19–T26, D87–H91, and N141–D144.

Belongs to the TRAFAC class translation factor GTPase superfamily. Classic translation factor GTPase family. PrfC subfamily.

Its subcellular location is the cytoplasm. Increases the formation of ribosomal termination complexes and stimulates activities of RF-1 and RF-2. It binds guanine nucleotides and has strong preference for UGA stop codons. It may interact directly with the ribosome. The stimulation of RF-1 and RF-2 is significantly reduced by GTP and GDP, but not by GMP. The polypeptide is Peptide chain release factor 3 (Listeria welshimeri serovar 6b (strain ATCC 35897 / DSM 20650 / CCUG 15529 / CIP 8149 / NCTC 11857 / SLCC 5334 / V8)).